Consider the following 986-residue polypeptide: Ephrin type-A receptor 4 (986 aa).

The first 19 residues, 1–19 (MAGVPVGALLPLLVGVCGA), serve as a signal peptide directing secretion. Over 20 to 547 (VTGSRVYPAN…PIIGDGTNPT (528 aa)) the chain is Extracellular. The Eph LBD domain maps to 30-209 (EVTLLDSRSV…FYKKCPLTVR (180 aa)). N235, N340, and N408 each carry an N-linked (GlcNAc...) asparagine glycan. Fibronectin type-III domains follow at residues 328–439 (PPSA…TNQA) and 440–537 (APSP…TVPS). The chain crosses the membrane as a helical span at residues 548–569 (VLLVSVAGSVVLVVILIAAFVI). Residues 570–986 (SRRRSKYSKA…QQMHGRMVPV (417 aa)) are Cytoplasmic-facing. 2 positions are modified to phosphotyrosine; by autocatalysis: Y596 and Y602. One can recognise a Protein kinase domain in the interval 621–882 (IKIEKVIGVG…QIVNMLDKLI (262 aa)). ATP-binding positions include 627 to 635 (IGVGEFGEV) and K653. D746 serves as the catalytic Proton acceptor. Phosphotyrosine; by autocatalysis occurs at positions 779 and 928. Positions 911–975 (SAVVSVSDWL…LSSVQAMRSQ (65 aa)) constitute an SAM domain. A PDZ-binding motif is present at residues 984–986 (VPV).

It belongs to the protein kinase superfamily. Tyr protein kinase family. Ephrin receptor subfamily. In terms of assembly, interacts with the src family kinase, p59-Fyn, through the major phosphorylation site at position Tyr-602. Interacts (via PDZ motif) with SIPA1L1 (via PDZ domain); controls neuronal morphology through regulation of the RAP1 (RAP1A or RAP1B) and RAP2 (RAP2A, RAP2B or RAP2C) GTPases. Expressed at high levels in brain, with expression also detected in the kidney, lung, muscle and thymus.

The protein localises to the cell membrane. It is found in the early endosome. The enzyme catalyses L-tyrosyl-[protein] + ATP = O-phospho-L-tyrosyl-[protein] + ADP + H(+). Its function is as follows. Receptor tyrosine kinase which binds membrane-bound ephrin family ligands residing on adjacent cells, leading to contact-dependent bidirectional signaling into neighboring cells. The signaling pathway downstream of the receptor is referred to as forward signaling while the signaling pathway downstream of the ephrin ligand is referred to as reverse signaling. Highly promiscuous, it has the unique property among Eph receptors to bind and to be physiologically activated by both GPI-anchored ephrin-A and transmembrane ephrin-B ligands including EFNA1 and EFNB3. Upon activation by ephrin ligands, modulates cell morphology and integrin-dependent cell adhesion through regulation of the Rac, Rap and Rho GTPases activity. Plays an important role in the development of the nervous system controlling different steps of axonal guidance including the establishment of the corticospinal projections. This is Ephrin type-A receptor 4 (EPHA4) from Gallus gallus (Chicken).